The primary structure comprises 170 residues: VIP peptides (170 aa).

A signal peptide spans 1–21 (MEARSKPQFLAFLILFSVLFS). The propeptide occupies 22–79 (QSLAWPLFGPPSVVRLDDRMPFEGAGDPDQVSLKADSDILQNPLAENGTPYYDVSRNA). S76 is subject to Phosphoserine. I107 is subject to Isoleucine amide. N133 is a glycosylation site (N-linked (GlcNAc...) asparagine). N152 is modified (asparagine amide). The propeptide occupies 156–170 (SSEGDSADFLEELEK).

Belongs to the glucagon family.

Its subcellular location is the secreted. Functionally, VIP is a neuropeptide involved in a diverse array of physiological processes through activating the PACAP subfamily of class B1 G protein-coupled receptors: VIP receptor 1 (VPR1) and VIP receptor 2 (VPR2). Abundantly expressed throughout the CNS and peripheral nervous systems where they primarily exert neuroprotective and immune modulatory roles. Also causes vasodilation, lowers arterial blood pressure, stimulates myocardial contractility, increases glycogenolysis and relaxes the smooth muscle of trachea, stomach and gall bladder. Its function is as follows. PHM-27 and PHV-42 are two bioactive forms from proteolysis of the same precursor protein, that cause vasodilation. PHM-27 is a potent agonist of the calcitonin receptor CALCR, with similar efficacy as calcitonin. The sequence is that of VIP peptides (Vip) from Mus musculus (Mouse).